We begin with the raw amino-acid sequence, 171 residues long: Shikimate kinase (171 aa).

14–19 (GAGKST) is a binding site for ATP. Ser18 serves as a coordination point for Mg(2+). Asp36, Arg60, and Gly82 together coordinate substrate. Arg120 provides a ligand contact to ATP. Residue Arg139 participates in substrate binding. Gln156 contributes to the ATP binding site.

The protein belongs to the shikimate kinase family. Monomer. Requires Mg(2+) as cofactor.

It localises to the cytoplasm. It catalyses the reaction shikimate + ATP = 3-phosphoshikimate + ADP + H(+). The protein operates within metabolic intermediate biosynthesis; chorismate biosynthesis; chorismate from D-erythrose 4-phosphate and phosphoenolpyruvate: step 5/7. In terms of biological role, catalyzes the specific phosphorylation of the 3-hydroxyl group of shikimic acid using ATP as a cosubstrate. This Shewanella baltica (strain OS195) protein is Shikimate kinase.